The sequence spans 828 residues: Periplasmic nitrate reductase (828 aa).

Residues 1 to 31 (MKLSRRSFMKANAVAAAAAAAGLSVPGVARA) constitute a signal peptide (tat-type signal). The 4Fe-4S Mo/W bis-MGD-type domain maps to 39-95 (IKWDKAPCRFCGTGCGVLVGTQQGRVVACQGDPDAPVNRGLNCIKGYFLPKIMYGKD). [4Fe-4S] cluster is bound by residues Cys-46, Cys-49, Cys-53, and Cys-81. Mo-bis(molybdopterin guanine dinucleotide) contacts are provided by residues Lys-83, Gln-150, Asn-175, Cys-179, 212–219 (WGANMAEM), 243–247 (STYQH), 262–264 (QSD), Met-372, Gln-376, Asn-482, 508–509 (SD), Lys-531, Asp-558, and 718–727 (TGRVLEHWHT). Substrate is bound at residue Phe-794. Mo-bis(molybdopterin guanine dinucleotide) contacts are provided by Asn-802 and Lys-819.

It belongs to the prokaryotic molybdopterin-containing oxidoreductase family. NasA/NapA/NarB subfamily. In terms of assembly, component of the periplasmic nitrate reductase NapAB complex composed of NapA and NapB. Requires [4Fe-4S] cluster as cofactor. The cofactor is Mo-bis(molybdopterin guanine dinucleotide). Post-translationally, predicted to be exported by the Tat system. The position of the signal peptide cleavage has not been experimentally proven.

The protein localises to the periplasm. It carries out the reaction 2 Fe(II)-[cytochrome] + nitrate + 2 H(+) = 2 Fe(III)-[cytochrome] + nitrite + H2O. Its function is as follows. Catalytic subunit of the periplasmic nitrate reductase complex NapAB. Receives electrons from NapB and catalyzes the reduction of nitrate to nitrite. In Escherichia coli O9:H4 (strain HS), this protein is Periplasmic nitrate reductase.